A 313-amino-acid chain; its full sequence is Small glutamine-rich tetratricopeptide repeat-containing protein alpha (313 aa).

Residues Ala66 to Glu100 form a disordered region. Ser77 bears the Phosphoserine mark. At Thr81 the chain carries Phosphothreonine. The residue at position 84 (Ser84) is a Phosphoserine. Residues Glu90–Glu100 show a composition bias toward basic and acidic residues. TPR repeat units lie at residues Ala91–Asn124, Ala125–Tyr158, and Ser159–Asn192. Residue Lys137 is modified to N6-acetyllysine. Positions Met250–Asp269 are disordered. A Phosphoserine modification is found at Ser301. Thr303 carries the phosphothreonine modification. Phosphoserine is present on Ser305.

This sequence belongs to the SGT family. As to quaternary structure, homodimer. Homooligomer. Interacts with DNAJC5 and DNAJC5B. Interacts (via TPR repeats) with HSP90AA1. Interacts (via Gln-rich region) with SLC2A1. Interacts with HSP90AB1. Interacts (via TPR repeats) with HSPA8/Hsc70; the interaction is direct. Interacts with BAG6 (via ubiquitin-like domain); interaction prevents interaction between BAG6 and RNF126. Forms a multiprotein complex, at least composed of DNAJB12, DNAJB14, HSPA8/Hsc70 and SGTA; interaction with DNAJB14 and HSPA8/Hsc70 is direct. (Microbial infection) Interacts with Vpu and Gag from HIV-1. In terms of assembly, (Microbial infection) Interacts with SARS-CoV accessory protein 7a. In terms of tissue distribution, ubiquitous.

The protein localises to the cytoplasm. It is found in the nucleus. Co-chaperone that binds misfolded and hydrophobic patches-containing client proteins in the cytosol. Mediates their targeting to the endoplasmic reticulum but also regulates their sorting to the proteasome when targeting fails. Functions in tail-anchored/type II transmembrane proteins membrane insertion constituting with ASNA1 and the BAG6 complex a targeting module. Functions upstream of the BAG6 complex and ASNA1, binding more rapidly the transmembrane domain of newly synthesized proteins. It is also involved in the regulation of the endoplasmic reticulum-associated misfolded protein catabolic process via its interaction with BAG6: collaborates with the BAG6 complex to maintain hydrophobic substrates in non-ubiquitinated states. Competes with RNF126 for interaction with BAG6, preventing the ubiquitination of client proteins associated with the BAG6 complex. Binds directly to HSC70 and HSP70 and regulates their ATPase activity. In terms of biological role, (Microbial infection) In case of infection by polyomavirus, involved in the virus endoplasmic reticulum membrane penetration and infection via interaction with DNAJB12, DNAJB14 and HSPA8/Hsc70. The chain is Small glutamine-rich tetratricopeptide repeat-containing protein alpha (SGTA) from Homo sapiens (Human).